Consider the following 184-residue polypeptide: ATP synthase subunit b (184 aa).

A helical transmembrane segment spans residues 25-45 (IFPSWPIMLATLVSFTILLVV).

The protein belongs to the ATPase B chain family. In terms of assembly, F-type ATPases have 2 components, F(1) - the catalytic core - and F(0) - the membrane proton channel. F(1) has five subunits: alpha(3), beta(3), gamma(1), delta(1), epsilon(1). F(0) has three main subunits: a(1), b(2) and c(10-14). The alpha and beta chains form an alternating ring which encloses part of the gamma chain. F(1) is attached to F(0) by a central stalk formed by the gamma and epsilon chains, while a peripheral stalk is formed by the delta and b chains.

The protein resides in the cell membrane. Its function is as follows. F(1)F(0) ATP synthase produces ATP from ADP in the presence of a proton or sodium gradient. F-type ATPases consist of two structural domains, F(1) containing the extramembraneous catalytic core and F(0) containing the membrane proton channel, linked together by a central stalk and a peripheral stalk. During catalysis, ATP synthesis in the catalytic domain of F(1) is coupled via a rotary mechanism of the central stalk subunits to proton translocation. Component of the F(0) channel, it forms part of the peripheral stalk, linking F(1) to F(0). This is ATP synthase subunit b from Mycoplasma mobile (strain ATCC 43663 / 163K / NCTC 11711) (Mesomycoplasma mobile).